Consider the following 117-residue polypeptide: CUE domain-containing protein CUE4 (117 aa).

Residues 27-74 (QVPSRTVQDAKPAPSVATNDPSPEPVPSAPEERVARLNRHGSDRKRAV) form a disordered region. A Glycyl lysine isopeptide (Lys-Gly) (interchain with G-Cter in ubiquitin) cross-link involves residue K37. Phosphoserine is present on S48. The span at 56–74 (PEERVARLNRHGSDRKRAV) shows a compositional bias: basic and acidic residues. Residues 74–116 (VNSDMVEIVMTMAPHVPQEKVVQDLRNTGSIEHTMENIFAGKL) form the CUE domain.

Post-translationally, ubiquitinated.

Its subcellular location is the cytoplasm. The protein localises to the endoplasmic reticulum. The protein is CUE domain-containing protein CUE4 (CUE4) of Saccharomyces cerevisiae (strain ATCC 204508 / S288c) (Baker's yeast).